The sequence spans 258 residues: Proteasome subunit beta type-1 (258 aa).

This sequence belongs to the peptidase T1B family. As to quaternary structure, the 26S proteasome consists of a 20S proteasome core and two 19S regulatory subunits. The 20S proteasome core is composed of 28 subunits that are arranged in four stacked rings, resulting in a barrel-shaped structure. The two end rings are each formed by seven alpha subunits, and the two central rings are each formed by seven beta subunits. The catalytic chamber with the active sites is on the inside of the barrel.

The protein resides in the cytoplasm. Its subcellular location is the nucleus. In terms of biological role, non-catalytic component of the proteasome, a multicatalytic proteinase complex which is characterized by its ability to cleave peptides with Arg, Phe, Tyr, Leu, and Glu adjacent to the leaving group at neutral or slightly basic pH. The proteasome has an ATP-dependent proteolytic activity. This Caenorhabditis elegans protein is Proteasome subunit beta type-1 (pbs-6).